Here is a 284-residue protein sequence, read N- to C-terminus: MDSYYKNKKKINFSKMHGLKNDFMVINCIKKNVFLTSHIIKKLSNRYTGIGFDQLLLVEKSNSLLTDFHYRIFNANGNEVEQCGNGARCFGLFLLLKGLTNKKKILISTKKKPLTIEFLTENMIKVNMNEPDFKFYNLSSLQNVLDNNFSIKLMNENLICNLVSIGNPHCIIKVQSVKNAPVNIIGDSIEKNPIFPEGVNVSFMEILNKKHIKLRVYERNVGETKACGSAACAAVAVGIAQKLLSDTVHVELLGGKLIIIWKGFGTPLYMVGPAKHVYDGYIYI.

The substrate site is built by Asn-21, Gln-54, and Asn-74. Cys-83 acts as the Proton donor in catalysis. Residues 84–85, Asn-167, Asn-200, and 218–219 contribute to the substrate site; these read GN and ER. Cys-227 serves as the catalytic Proton acceptor. 228-229 contributes to the substrate binding site; sequence GS.

The protein belongs to the diaminopimelate epimerase family. As to quaternary structure, homodimer.

The protein localises to the cytoplasm. The catalysed reaction is (2S,6S)-2,6-diaminopimelate = meso-2,6-diaminopimelate. It functions in the pathway amino-acid biosynthesis; L-lysine biosynthesis via DAP pathway; DL-2,6-diaminopimelate from LL-2,6-diaminopimelate: step 1/1. Catalyzes the stereoinversion of LL-2,6-diaminopimelate (L,L-DAP) to meso-diaminopimelate (meso-DAP), a precursor of L-lysine and an essential component of the bacterial peptidoglycan. The protein is Diaminopimelate epimerase of Buchnera aphidicola subsp. Acyrthosiphon pisum (strain APS) (Acyrthosiphon pisum symbiotic bacterium).